Consider the following 379-residue polypeptide: Type II methyltransferase M.SsoII (379 aa).

One can recognise an HTH cro/C1-type domain in the interval 9–66 (IKEKRERLHMTQKEFADALGLSKYGDRTIRRWERGETKPTGAELKAVIDFPDTPPYPN). One can recognise an SAM-dependent MTase C5-type domain in the interval 72 to 379 (YRMIDLFAGI…AEKIISTLDS (308 aa)). Residue cysteine 142 is part of the active site.

Belongs to the class I-like SAM-binding methyltransferase superfamily. C5-methyltransferase family.

The catalysed reaction is a 2'-deoxycytidine in DNA + S-adenosyl-L-methionine = a 5-methyl-2'-deoxycytidine in DNA + S-adenosyl-L-homocysteine + H(+). In terms of biological role, a methylase that recognizes the double-stranded sequence 5'-CCNGG-3', methylates C-2 on both strands, and protects the DNA from cleavage by the SsoII endonuclease. The sequence is that of Type II methyltransferase M.SsoII (ssoIIM) from Shigella sonnei.